A 525-amino-acid polypeptide reads, in one-letter code: GMP synthase [glutamine-hydrolyzing] (525 aa).

Residues 7–207 (RILVIDFGSQ…ITCICRCKSS (201 aa)) form the Glutamine amidotransferase type-1 domain. Catalysis depends on Cys84, which acts as the Nucleophile. Active-site residues include His181 and Glu183. The 193-residue stretch at 208-400 (WKIANIIDDI…LGIPYDIAYR (193 aa)) folds into the GMPS ATP-PPase domain. 235–241 (SGGIDSL) contacts ATP.

Homodimer.

It catalyses the reaction XMP + L-glutamine + ATP + H2O = GMP + L-glutamate + AMP + diphosphate + 2 H(+). It participates in purine metabolism; GMP biosynthesis; GMP from XMP (L-Gln route): step 1/1. Catalyzes the synthesis of GMP from XMP. This is GMP synthase [glutamine-hydrolyzing] from Blochmanniella pennsylvanica (strain BPEN).